We begin with the raw amino-acid sequence, 645 residues long: Protein FAM47B (645 aa).

Composition is skewed to basic and acidic residues over residues 1–11 (MGDRRPQDRPR), 238–251 (EPPE…RVDP), and 288–299 (PETRVSHLHPEP). 2 disordered regions span residues 1–23 (MGDR…WYCD) and 168–321 (AREK…SLCP).

It belongs to the FAM47 family.

The sequence is that of Protein FAM47B (FAM47B) from Homo sapiens (Human).